A 432-amino-acid chain; its full sequence is MVVDTEYYDLLGVSTTASSIEIKKAYRKKSIQEHPDKNPNDPTATERFQAISEAYQVLGDDDLRAKYDKYGRKEAIPQGGFEDAAEQFSVIFGGDAFASYIGELMLLKNLQKTEELNAEDEAEKEKENVETMEESPADGKTNGTTNAVDAALGNTNEKDDKNKARTTSGNLTVHDGNKKNEQVGAEAKKKKTKLEQFEEEQEVEKQKRVDQLSKTLIERLSILTESVYDDACKDSFKKKFEEEANLLKMESFGLDILHTIGDVYYEKAEIFLASQNLFGMGGIFHSMKAKGGVFMDTLRTVSAAIDAQNTMKELEKMKEASTNNEPLFDKDGNEQIKPTTEELAQQEQLLMGKVLSAAWHGSKYEITSTLRGVCKKVLEDDSVSKKTLIRRAEAMKLLGEVFKKTFRTKVEQEEAQIFEELVAEATKKKRHT.

A J domain is found at 4–73; that stretch reads DTEYYDLLGV…RAKYDKYGRK (70 aa). The disordered stretch occupies residues 117 to 187; the sequence is NAEDEAEKEK…KKNEQVGAEA (71 aa).

It belongs to the DnaJ family. As to quaternary structure, interacts with SLN1.

It localises to the cytoplasm. Its function is as follows. Required for peroxisomal protein import which maintains the function of peroxisomes. The polypeptide is DnaJ-like protein 1 (DJP1) (Saccharomyces cerevisiae (strain ATCC 204508 / S288c) (Baker's yeast)).